A 1335-amino-acid chain; its full sequence is Aldehyde oxidase 2 (1335 aa).

Residues 8 to 95 (DVLVFFVNGR…GAAVTTVEGV (88 aa)) enclose the 2Fe-2S ferredoxin-type domain. [2Fe-2S] cluster contacts are provided by cysteine 47, cysteine 52, cysteine 55, and cysteine 77. Mo-molybdopterin is bound at residue glutamine 116. Cysteine 117, cysteine 120, cysteine 152, and cysteine 154 together coordinate [2Fe-2S] cluster. Cysteine 154 contributes to the Mo-molybdopterin binding site. The region spanning 242-427 (FRGDRVTWVS…ESVHIPHSQK (186 aa)) is the FAD-binding PCMH-type domain. FAD is bound by residues 270–277 (LVLGNTAL), alanine 351, serine 360, histidine 364, aspartate 373, and leucine 417. Mo-molybdopterin is bound by residues 821–822 (GF), 1103–1106 (ASVG), glutamine 1218, and leucine 1285. The active-site Proton acceptor; for azaheterocycle hydroxylase activity is the glutamate 1287.

Belongs to the xanthine dehydrogenase family. In terms of assembly, homodimer. [2Fe-2S] cluster serves as cofactor. The cofactor is FAD. Mo-molybdopterin is required as a cofactor. As to expression, detected in kidney, Harderian gland and olfactory mucosa.

The protein localises to the cytoplasm. It catalyses the reaction an aldehyde + O2 + H2O = a carboxylate + H2O2 + H(+). Its function is as follows. Oxidase with broad substrate specificity, oxidizing aromatic azaheterocycles, such as phthalazine, as well as aldehydes, such as benzaldehyde and retinal. The polypeptide is Aldehyde oxidase 2 (AOX2) (Cavia porcellus (Guinea pig)).